The chain runs to 80 residues: MSLEILEQLEAKVQMAVDTIALLQMEVEELKETNAELTQNLEQANNGRSEVEQEAQKARDEQASFEARIRGLLGKMEEVE.

Residues 3 to 80 (LEILEQLEAK…GLLGKMEEVE (78 aa)) adopt a coiled-coil conformation. The disordered stretch occupies residues 41-62 (LEQANNGRSEVEQEAQKARDEQ). The span at 49–62 (SEVEQEAQKARDEQ) shows a compositional bias: basic and acidic residues.

It belongs to the ZapB family. As to quaternary structure, homodimer. The ends of the coiled-coil dimer bind to each other, forming polymers. Interacts with FtsZ.

Its subcellular location is the cytoplasm. Functionally, non-essential, abundant cell division factor that is required for proper Z-ring formation. It is recruited early to the divisome by direct interaction with FtsZ, stimulating Z-ring assembly and thereby promoting cell division earlier in the cell cycle. Its recruitment to the Z-ring requires functional FtsA or ZipA. The chain is Cell division protein ZapB from Aliivibrio salmonicida (strain LFI1238) (Vibrio salmonicida (strain LFI1238)).